Reading from the N-terminus, the 543-residue chain is Terpineol synthase, chloroplastic (543 aa).

The tract at residues 1–22 (MNTEPSPNHYSAISSSDQNLTR) is disordered. 5 residues coordinate (2E)-geranyl diphosphate: R263, D300, D304, R435, and N438. 2 residues coordinate Mg(2+): D300 and D304. Positions 300–304 (DDVYD) match the DDXXD motif motif. Residues N438, T442, and E446 each coordinate Mg(2+).

This sequence belongs to the terpene synthase family. Tpsb subfamily. As to quaternary structure, monomer. Requires Mg(2+) as cofactor. The cofactor is Mn(2+). In terms of tissue distribution, confined to flowers.

It is found in the plastid. The protein resides in the chloroplast. The catalysed reaction is (2E)-geranyl diphosphate + H2O = (S)-alpha-terpineol + diphosphate. It carries out the reaction (2E)-geranyl diphosphate = sabinene + diphosphate. It catalyses the reaction (2E)-geranyl diphosphate = beta-myrcene + diphosphate. The enzyme catalyses (2E)-geranyl diphosphate = limonene + diphosphate. The catalysed reaction is (2E)-geranyl diphosphate + H2O = 1,8-cineole + diphosphate. The protein operates within secondary metabolite biosynthesis; terpenoid biosynthesis. Its function is as follows. Monoterpene synthase (TPS) involved in the biosynthesis of monoterpene natural products of the 'cineole cassette', volatile compounds present in floral scent. Catalyzes the conversion of (2E)-geranyl diphosphate (GPP) into alpha-terpineol and, as minor products, sabinene, beta-myrcene, limonene and 1,8-cineole. In Nicotiana alata (Winged tobacco), this protein is Terpineol synthase, chloroplastic.